The sequence spans 480 residues: UDP-glucose 6-dehydrogenase 2 (480 aa).

NAD(+)-binding positions include 8-13 (GAGYVG), aspartate 33, arginine 38, 86-90 (VNTPT), 127-128 (ST), and glutamate 161. Substrate contacts are provided by residues 157 to 161 (EFLAE), 216 to 223 (KLAANAFL), and 256 to 269 (RIGP…VGFG). Cysteine 272 serves as the catalytic Nucleophile. NAD(+) is bound at residue 272-275 (CFQK). Residue 334 to 335 (FK) coordinates substrate. An NAD(+)-binding site is contributed by arginine 342. Arginine 447 contributes to the substrate binding site.

This sequence belongs to the UDP-glucose/GDP-mannose dehydrogenase family. As to expression, preferentially expressed in roots.

The catalysed reaction is UDP-alpha-D-glucose + 2 NAD(+) + H2O = UDP-alpha-D-glucuronate + 2 NADH + 3 H(+). It participates in nucleotide-sugar biosynthesis; UDP-alpha-D-glucuronate biosynthesis; UDP-alpha-D-glucuronate from UDP-alpha-D-glucose: step 1/1. With respect to regulation, inhibited by UDP-xylose. Involved in the biosynthesis of UDP-glucuronic acid (UDP-GlcA), providing nucleotide sugars for cell-wall polymers. Required for the formation of cell wall ingrowths on the outer cell walls of nematode-induced syncytia. This Arabidopsis thaliana (Mouse-ear cress) protein is UDP-glucose 6-dehydrogenase 2 (UGD2).